Here is a 390-residue protein sequence, read N- to C-terminus: S-adenosylmethionine synthase (390 aa).

H17 is a binding site for ATP. D19 serves as a coordination point for Mg(2+). Position 45 (E45) interacts with K(+). E58 and Q101 together coordinate L-methionine. The segment at 101–111 (QSPDIGQGVDT) is flexible loop. ATP-binding positions include 160-162 (DGK), 226-227 (RF), D235, 241-242 (RK), A258, and K262. L-methionine is bound at residue D235. K266 serves as a coordination point for L-methionine.

It belongs to the AdoMet synthase family. As to quaternary structure, homotetramer; dimer of dimers. Requires Mg(2+) as cofactor. The cofactor is K(+).

The protein resides in the cytoplasm. It carries out the reaction L-methionine + ATP + H2O = S-adenosyl-L-methionine + phosphate + diphosphate. The protein operates within amino-acid biosynthesis; S-adenosyl-L-methionine biosynthesis; S-adenosyl-L-methionine from L-methionine: step 1/1. Its function is as follows. Catalyzes the formation of S-adenosylmethionine (AdoMet) from methionine and ATP. The overall synthetic reaction is composed of two sequential steps, AdoMet formation and the subsequent tripolyphosphate hydrolysis which occurs prior to release of AdoMet from the enzyme. This is S-adenosylmethionine synthase from Anaeromyxobacter dehalogenans (strain 2CP-1 / ATCC BAA-258).